The primary structure comprises 46 residues: Iota-conotoxin-like Fi11.8 (46 aa).

4-hydroxyproline occurs at positions 2 and 11. 4 cysteine pairs are disulfide-bonded: Cys5–Cys19, Cys12–Cys22, Cys18–Cys27, and Cys21–Cys38. Pro29 carries the 4-hydroxyproline modification. At Trp33 the chain carries 6'-bromotryptophan. Phe44 bears the D-phenylalanine mark.

Belongs to the conotoxin I1 superfamily. Expressed by the venom duct.

It localises to the secreted. Functionally, iota-conotoxins bind to voltage-gated sodium channels (Nav) and act as agonists by shifting the voltage-dependence of activation to more hyperpolarized levels. Produces general excitatory symptoms. The polypeptide is Iota-conotoxin-like Fi11.8 (Conus figulinus (Fig cone)).